The following is a 197-amino-acid chain: Thymidine kinase (197 aa).

Residues 9 to 16 (SAMDAGKT) and 87 to 90 (DEIH) each bind ATP. The active-site Proton acceptor is the E88. Positions 145, 147, 187, and 190 each coordinate Zn(2+).

The protein belongs to the thymidine kinase family. As to quaternary structure, homotetramer.

It localises to the cytoplasm. The catalysed reaction is thymidine + ATP = dTMP + ADP + H(+). The protein is Thymidine kinase of Francisella tularensis subsp. holarctica (strain LVS).